We begin with the raw amino-acid sequence, 185 residues long: Endoribonuclease YbeY (185 aa).

Zn(2+) is bound by residues His-142, His-146, and His-152.

Belongs to the endoribonuclease YbeY family. Zn(2+) serves as cofactor.

It is found in the cytoplasm. In terms of biological role, single strand-specific metallo-endoribonuclease involved in late-stage 70S ribosome quality control and in maturation of the 3' terminus of the 16S rRNA. The protein is Endoribonuclease YbeY of Parvibaculum lavamentivorans (strain DS-1 / DSM 13023 / NCIMB 13966).